Reading from the N-terminus, the 554-residue chain is Nuclear division defective protein 1 (554 aa).

Disordered regions lie at residues 1-31 (MDRD…NNAD) and 98-117 (IQQQ…ALGS). The span at 98–113 (IQQQQQQQQQQQQQQQ) shows a compositional bias: low complexity. Threonine 319 is modified (phosphothreonine; by CDC28). Disordered stretches follow at residues 410–475 (PTPN…GKKP) and 493–554 (SSSS…FNSQ). The segment covering 411–427 (TPNCNSLHSTTTGTSAL) has biased composition (polar residues). Over residues 448-465 (SSSNTVSFKSKSGNNNSK) the composition is skewed to low complexity. Residues 466–475 (GRIKKNGKKP) show a composition bias toward basic residues. The segment covering 493 to 513 (SSSSLSSSLNASSSAGNSNSN) has biased composition (low complexity). Residues 515–524 (TKKRASKLKR) show a composition bias toward basic residues. Over residues 525–536 (SQSLLSDSGSKS) the composition is skewed to low complexity. Residues 539 to 554 (RKSCNSKSNGNLFNSQ) are compositionally biased toward polar residues.

Forms an activator complex with FKH2. In terms of processing, phosphorylation of Thr-319 by CDC28 is required for the interaction with FKH2 and recruitment to promoters.

It is found in the cytoplasm. It localises to the nucleus. Transcription activator involved in G2/M transcription through its association with FKH2. The sequence is that of Nuclear division defective protein 1 (NDD1) from Saccharomyces cerevisiae (strain ATCC 204508 / S288c) (Baker's yeast).